We begin with the raw amino-acid sequence, 670 residues long: DNA ligase (670 aa).

NAD(+) is bound by residues 33–37 (DAEYD), 82–83 (SL), and Glu114. Lys116 serves as the catalytic N6-AMP-lysine intermediate. 4 residues coordinate NAD(+): Arg137, Glu173, Lys291, and Lys315. Positions 409, 412, 427, and 433 each coordinate Zn(2+). Residues 592–670 (VQSDRLSGNT…ENALAELLSD (79 aa)) form the BRCT domain.

The protein belongs to the NAD-dependent DNA ligase family. LigA subfamily. The cofactor is Mg(2+). It depends on Mn(2+) as a cofactor.

It catalyses the reaction NAD(+) + (deoxyribonucleotide)n-3'-hydroxyl + 5'-phospho-(deoxyribonucleotide)m = (deoxyribonucleotide)n+m + AMP + beta-nicotinamide D-nucleotide.. Functionally, DNA ligase that catalyzes the formation of phosphodiester linkages between 5'-phosphoryl and 3'-hydroxyl groups in double-stranded DNA using NAD as a coenzyme and as the energy source for the reaction. It is essential for DNA replication and repair of damaged DNA. The protein is DNA ligase of Idiomarina loihiensis (strain ATCC BAA-735 / DSM 15497 / L2-TR).